The following is a 328-amino-acid chain: Ubiquitin carboxyl-terminal hydrolase isozyme L5 (328 aa).

One can recognise a UCH catalytic domain in the interval 7–225; sequence EWCLMESDPG…IRFNLMAIVS (219 aa). Lys47 is subject to N6-succinyllysine. Cys88 serves as the catalytic Nucleophile. The residue at position 158 (Lys158) is an N6-acetyllysine. His164 (proton donor) is an active-site residue. Residue Lys288 is modified to N6-succinyllysine. Residues 290-318 form the ULD domain; it reads NYLPFIMELLKTLAEHQQLIPLVEKAKEK. Residues 312–328 form an interaction with ADRM1 region; that stretch reads VEKAKEKQNAKKAQETK.

This sequence belongs to the peptidase C12 family. Component of the 19S (PA700) regulatory complex of the 26S proteasome. Interacts with ADRM1 and NFRKB. Component of the INO80 complex; specifically part of a complex module associated with N-terminus of INO80.

It is found in the cytoplasm. Its subcellular location is the nucleus. The enzyme catalyses Thiol-dependent hydrolysis of ester, thioester, amide, peptide and isopeptide bonds formed by the C-terminal Gly of ubiquitin (a 76-residue protein attached to proteins as an intracellular targeting signal).. Activated by ADRM1. Inhibited by interaction with NFRKB. In terms of biological role, protease that specifically cleaves 'Lys-48'-linked polyubiquitin chains. Deubiquitinating enzyme associated with the 19S regulatory subunit of the 26S proteasome. Putative regulatory component of the INO80 complex; however is inactive in the INO80 complex and is activated by a transient interaction of the INO80 complex with the proteasome via ADRM1. The polypeptide is Ubiquitin carboxyl-terminal hydrolase isozyme L5 (UCHL5) (Bos taurus (Bovine)).